A 609-amino-acid polypeptide reads, in one-letter code: Altered inheritance of mitochondria protein 9, mitochondrial (609 aa).

Residues 1–24 constitute a mitochondrion transit peptide; the sequence is MSIIQARCIGNLTRRSIVNVMSRR.

It belongs to the AIM9 family.

It is found in the mitochondrion. This chain is Altered inheritance of mitochondria protein 9, mitochondrial (AIM9), found in Meyerozyma guilliermondii (strain ATCC 6260 / CBS 566 / DSM 6381 / JCM 1539 / NBRC 10279 / NRRL Y-324) (Yeast).